Here is a 77-residue protein sequence, read N- to C-terminus: Acyl carrier protein (77 aa).

One can recognise a Carrier domain in the interval 1–76 (MSIEERVKKI…SAIDYVAKAN (76 aa)). Serine 36 is subject to O-(pantetheine 4'-phosphoryl)serine.

The protein belongs to the acyl carrier protein (ACP) family. 4'-phosphopantetheine is transferred from CoA to a specific serine of apo-ACP by AcpS. This modification is essential for activity because fatty acids are bound in thioester linkage to the sulfhydryl of the prosthetic group.

It localises to the cytoplasm. Its pathway is lipid metabolism; fatty acid biosynthesis. Functionally, carrier of the growing fatty acid chain in fatty acid biosynthesis. The protein is Acyl carrier protein of Haemophilus ducreyi (strain 35000HP / ATCC 700724).